The primary structure comprises 197 residues: ATP-dependent Clp protease proteolytic subunit 1 (197 aa).

Residue Ser-100 is the Nucleophile of the active site. His-125 is a catalytic residue.

It belongs to the peptidase S14 family. As to quaternary structure, fourteen ClpP subunits assemble into 2 heptameric rings which stack back to back to give a disk-like structure with a central cavity, resembling the structure of eukaryotic proteasomes.

It is found in the cytoplasm. The enzyme catalyses Hydrolysis of proteins to small peptides in the presence of ATP and magnesium. alpha-casein is the usual test substrate. In the absence of ATP, only oligopeptides shorter than five residues are hydrolyzed (such as succinyl-Leu-Tyr-|-NHMec, and Leu-Tyr-Leu-|-Tyr-Trp, in which cleavage of the -Tyr-|-Leu- and -Tyr-|-Trp bonds also occurs).. Its function is as follows. Cleaves peptides in various proteins in a process that requires ATP hydrolysis. Has a chymotrypsin-like activity. Plays a major role in the degradation of misfolded proteins. The sequence is that of ATP-dependent Clp protease proteolytic subunit 1 from Gloeobacter violaceus (strain ATCC 29082 / PCC 7421).